Here is a 454-residue protein sequence, read N- to C-terminus: Glutamyl-tRNA(Gln) amidotransferase subunit A (454 aa).

Catalysis depends on charge relay system residues K56 and S131. The active-site Acyl-ester intermediate is the S155.

It belongs to the amidase family. GatA subfamily. As to quaternary structure, heterotrimer of A, B and C subunits.

The catalysed reaction is L-glutamyl-tRNA(Gln) + L-glutamine + ATP + H2O = L-glutaminyl-tRNA(Gln) + L-glutamate + ADP + phosphate + H(+). Functionally, allows the formation of correctly charged Gln-tRNA(Gln) through the transamidation of misacylated Glu-tRNA(Gln) in organisms which lack glutaminyl-tRNA synthetase. The reaction takes place in the presence of glutamine and ATP through an activated gamma-phospho-Glu-tRNA(Gln). The polypeptide is Glutamyl-tRNA(Gln) amidotransferase subunit A (Campylobacter lari (strain RM2100 / D67 / ATCC BAA-1060)).